Consider the following 180-residue polypeptide: MSRVGKLPVAIPNGVTVTVTPDNVVTVKGSKGELVKAMSNKINIAVEDNSVVVTRDNDHKDVRALHGLTRALINNMVTGVNEGYVKTLELIGVGYRAQLQGKKLVLSLGFSHPVEMEAVSGVEFEVEGGTKVKVKGIDKELVGAVAADIRKWRKPEPYKGKGIKYENEVIRRKEGKTGKK.

The protein belongs to the universal ribosomal protein uL6 family. As to quaternary structure, part of the 50S ribosomal subunit.

This protein binds to the 23S rRNA, and is important in its secondary structure. It is located near the subunit interface in the base of the L7/L12 stalk, and near the tRNA binding site of the peptidyltransferase center. This chain is Large ribosomal subunit protein uL6, found in Clostridium botulinum (strain Loch Maree / Type A3).